The primary structure comprises 76 residues: Conotoxin MaIr332 (76 aa).

The signal sequence occupies residues 1–21 (MKLTCVIVAVLFLTAWTFVTA). The propeptide occupies 22–48 (DDSGNGLENLFSKAHHEMKNPKDSKLN). 3 disulfide bridges follow: cysteine 51/cysteine 66, cysteine 58/cysteine 70, and cysteine 65/cysteine 75.

This sequence belongs to the conotoxin O1 superfamily. In terms of tissue distribution, expressed by the venom duct.

The protein resides in the secreted. The sequence is that of Conotoxin MaIr332 from Conus marmoreus (Marble cone).